The following is an 84-amino-acid chain: Large ribosomal subunit protein bL27 (84 aa).

The interval 1 to 21 is disordered; sequence MAHKKGGGSTKNGRDSNPKYL.

The protein belongs to the bacterial ribosomal protein bL27 family.

This chain is Large ribosomal subunit protein bL27, found in Pelodictyon phaeoclathratiforme (strain DSM 5477 / BU-1).